The sequence spans 456 residues: Phosphomannomutase (456 aa).

Serine 98 serves as the catalytic Phosphoserine intermediate. Residues serine 98, aspartate 245, aspartate 247, and aspartate 249 each coordinate Mg(2+).

This sequence belongs to the phosphohexose mutase family. Mg(2+) serves as cofactor.

It catalyses the reaction alpha-D-mannose 1-phosphate = D-mannose 6-phosphate. It participates in nucleotide-sugar biosynthesis; GDP-alpha-D-mannose biosynthesis; alpha-D-mannose 1-phosphate from D-fructose 6-phosphate: step 2/2. Its function is as follows. Involved in the biosynthesis of the capsular polysaccharide colanic acid. The chain is Phosphomannomutase (manB) from Salmonella typhimurium (strain LT2 / SGSC1412 / ATCC 700720).